We begin with the raw amino-acid sequence, 415 residues long: MQTWSSVAVPRVPGTSRPLRLYDTATGQIRPTAPGRVAKMYVCGITPYDATHLGHAATYLAFDLVHRLWLDAGHEVHYVQNVTDIDDPLLERAERDSEDWVVLGLRETALFREDMEALRVLPPRDFVGAVESIPEVVEMIEKLLASGAAYRVDDPEYPDVYFDRSFTGRFGYESNYDDETMRAIFPERGGDPDRPGKRDPLDALLWRVERPGEPAWDSSLGRGRPGWHIECSAIALKHLGIGFDVQGGGSDLVFPHHEFSAAHAEAMTGEHPFARHYVHAGMIGLDGEKMSKSKGNLVFVSRLRADDVDPSAIRLALFAGHYRDDREWTDELLKQANSRLARWREAVSLPSGPDAEATVDRLRDHLADDLDTPKALAAVDAWVDEALRHRSGTVGSESAPALVRAAVDSLLGVVL.

A Zn(2+)-binding site is contributed by C43. L-cysteinyl-5'-AMP is bound by residues 43-46, T58, and 81-83; these read CGIT and NVT. The 'HIGH' region motif lies at 45–55; sequence ITPYDATHLGH. The 'ERGGDP' region signature appears at 187–192; it reads ERGGDP. L-cysteinyl-5'-AMP is bound at residue W227. Position 231 (C231) interacts with Zn(2+). 249–251 contacts L-cysteinyl-5'-AMP; it reads GSD. A Zn(2+)-binding site is contributed by H256. L-cysteinyl-5'-AMP is bound at residue I283. Positions 289–293 match the 'KMSKS' region motif; it reads KMSKS.

Belongs to the class-I aminoacyl-tRNA synthetase family. MshC subfamily. As to quaternary structure, monomer. Zn(2+) is required as a cofactor.

It carries out the reaction 1D-myo-inositol 2-amino-2-deoxy-alpha-D-glucopyranoside + L-cysteine + ATP = 1D-myo-inositol 2-(L-cysteinylamino)-2-deoxy-alpha-D-glucopyranoside + AMP + diphosphate + H(+). Functionally, catalyzes the ATP-dependent condensation of GlcN-Ins and L-cysteine to form L-Cys-GlcN-Ins. This is L-cysteine:1D-myo-inositol 2-amino-2-deoxy-alpha-D-glucopyranoside ligase from Saccharomonospora viridis (strain ATCC 15386 / DSM 43017 / JCM 3036 / CCUG 5913 / NBRC 12207 / NCIMB 9602 / P101) (Thermoactinomyces viridis).